Here is a 467-residue protein sequence, read N- to C-terminus: UDP-N-acetylmuramate--L-alanine ligase (467 aa).

114–120 (GTHGKTT) contacts ATP.

This sequence belongs to the MurCDEF family.

It localises to the cytoplasm. It catalyses the reaction UDP-N-acetyl-alpha-D-muramate + L-alanine + ATP = UDP-N-acetyl-alpha-D-muramoyl-L-alanine + ADP + phosphate + H(+). It functions in the pathway cell wall biogenesis; peptidoglycan biosynthesis. Cell wall formation. This chain is UDP-N-acetylmuramate--L-alanine ligase, found in Rhodopseudomonas palustris (strain BisA53).